A 305-amino-acid polypeptide reads, in one-letter code: Putative UDP-glucose 4-epimerase (305 aa).

Residues 10–11 (FI), 30–35 (DNLTTG), 50–51 (DI), and 71–75 (QAAQI) each bind NAD(+). Substrate-binding residues include serine 115 and tyrosine 140. Residues tyrosine 140 and lysine 144 each contribute to the NAD(+) site. The Proton acceptor role is filled by tyrosine 140. Residues asparagine 169, 183–184 (VI), 198–200 (IIF), arginine 207, and 263–266 (REGE) each bind substrate.

This sequence belongs to the NAD(P)-dependent epimerase/dehydratase family. Requires NAD(+) as cofactor.

It catalyses the reaction UDP-alpha-D-glucose = UDP-alpha-D-galactose. The protein operates within carbohydrate metabolism; galactose metabolism. Its function is as follows. Involved in the metabolism of galactose. Catalyzes the conversion of UDP-galactose (UDP-Gal) to UDP-glucose (UDP-Glc) through a mechanism involving the transient reduction of NAD. This chain is Putative UDP-glucose 4-epimerase, found in Methanocaldococcus jannaschii (strain ATCC 43067 / DSM 2661 / JAL-1 / JCM 10045 / NBRC 100440) (Methanococcus jannaschii).